Here is a 271-residue protein sequence, read N- to C-terminus: Aquaporin-2 (271 aa).

The Cytoplasmic segment spans residues 1 to 11 (MWELRSIAFSR). A helical transmembrane segment spans residues 12–32 (AVLAEFLATLLFVFFGLGSAL). The Extracellular segment spans residues 33-40 (NWPQALPS). Residues 41–59 (VLQIAMAFGLAIGTLVQAL) traverse the membrane as a helical segment. Over 60–64 (GHVSG) the chain is Cytoplasmic. An intramembrane region (discontinuously helical) is located at residues 65-74 (AHINPAVTVA). The NPA 1 motif lies at 68 to 70 (NPA). The Cytoplasmic portion of the chain corresponds to 75–85 (CLVGCHVSFLR). The helical transmembrane segment at 86-107 (AVFYVAAQLLGAVAGAALLHEI) threads the bilayer. Over 108-127 (TPPAIRGDLAVNALNNNSTA) the chain is Extracellular. Residues Asn123 and Asn124 are each glycosylated (N-linked (GlcNAc...) asparagine). A helical membrane pass occupies residues 128–148 (GQAVTVELFLTLQLVLCIFPS). At 149–156 (TDKRRGKQ) the chain is on the cytoplasmic side. The helical transmembrane segment at 157–176 (LGHPALSIGFSVALGHLLGI) threads the bilayer. The Extracellular portion of the chain corresponds to 177–180 (HYTG). An intramembrane region (discontinuously helical) is located at residues 181–193 (CSMNPARSLAPAI). The NPA 2 motif lies at 184 to 186 (NPA). At 194 to 201 (VTGKFDDH) the chain is on the extracellular side. The helical transmembrane segment at 202-222 (WVFWIGPLVGAIVASLLYNYV) threads the bilayer. Residues 223-271 (LFPPAKSLSERLAVLKGLEPDTDWEEREVRRRQSVELHSPQSLPRGTKA) lie on the Cytoplasmic side of the membrane. The tract at residues 249-271 (REVRRRQSVELHSPQSLPRGTKA) is disordered. The residue at position 256 (Ser256) is a Phosphoserine. Polar residues predominate over residues 261 to 271 (SPQSLPRGTKA).

This sequence belongs to the MIP/aquaporin (TC 1.A.8) family. In terms of assembly, homotetramer. Ser-256 phosphorylation is necessary and sufficient for expression at the apical membrane. Endocytosis is not phosphorylation-dependent. In terms of processing, N-glycosylated. In terms of tissue distribution, expressed in renal collecting tubules.

It localises to the apical cell membrane. The protein localises to the basolateral cell membrane. The protein resides in the cell membrane. Its subcellular location is the cytoplasmic vesicle membrane. It is found in the golgi apparatus. It localises to the trans-Golgi network membrane. The enzyme catalyses H2O(in) = H2O(out). It catalyses the reaction glycerol(in) = glycerol(out). Its function is as follows. Forms a water-specific channel that provides the plasma membranes of renal collecting duct with high permeability to water, thereby permitting water to move in the direction of an osmotic gradient. Could also be permeable to glycerol. The chain is Aquaporin-2 from Ovis aries (Sheep).